Consider the following 299-residue polypeptide: ATP phosphoribosyltransferase (299 aa).

Belongs to the ATP phosphoribosyltransferase family. Long subfamily. Equilibrium between an active dimeric form, an inactive hexameric form and higher aggregates. Interconversion between the various forms is largely reversible and is influenced by the natural substrates and inhibitors of the enzyme. Requires Mg(2+) as cofactor.

The protein resides in the cytoplasm. It catalyses the reaction 1-(5-phospho-beta-D-ribosyl)-ATP + diphosphate = 5-phospho-alpha-D-ribose 1-diphosphate + ATP. It functions in the pathway amino-acid biosynthesis; L-histidine biosynthesis; L-histidine from 5-phospho-alpha-D-ribose 1-diphosphate: step 1/9. With respect to regulation, feedback inhibited by histidine. Functionally, catalyzes the condensation of ATP and 5-phosphoribose 1-diphosphate to form N'-(5'-phosphoribosyl)-ATP (PR-ATP). Has a crucial role in the pathway because the rate of histidine biosynthesis seems to be controlled primarily by regulation of HisG enzymatic activity. In Buchnera aphidicola subsp. Acyrthosiphon pisum (strain 5A), this protein is ATP phosphoribosyltransferase.